The chain runs to 418 residues: Probable serine hydroxymethyltransferase (418 aa).

(6S)-5,6,7,8-tetrahydrofolate-binding positions include Leu-118 and 122–124; that span reads GHL. Position 226 is an N6-(pyridoxal phosphate)lysine (Lys-226). 351–353 contributes to the (6S)-5,6,7,8-tetrahydrofolate binding site; the sequence is SPF.

The protein belongs to the SHMT family. Homodimer. Pyridoxal 5'-phosphate is required as a cofactor.

It localises to the cytoplasm. The catalysed reaction is (6R)-5,10-methylene-5,6,7,8-tetrahydrofolate + glycine + H2O = (6S)-5,6,7,8-tetrahydrofolate + L-serine. It functions in the pathway one-carbon metabolism; tetrahydrofolate interconversion. Functionally, catalyzes the reversible interconversion of serine and glycine with tetrahydrofolate (THF) serving as the one-carbon carrier. This reaction serves as the major source of one-carbon groups required for the biosynthesis of purines, thymidylate, methionine, and other important biomolecules. The sequence is that of Probable serine hydroxymethyltransferase from Mesomycoplasma hyopneumoniae (strain 7448) (Mycoplasma hyopneumoniae).